A 108-amino-acid polypeptide reads, in one-letter code: Alkyltransferase-like protein 1 (108 aa).

This sequence belongs to the MGMT family. ATL subfamily.

In terms of biological role, involved in DNA damage recognition. Binds DNA containing O(6)-methylguanine and larger O(6)-alkylguanine adducts. The DNA is bent, the damaged base is rotated out of the DNA duplex into a hydrophobic binding pocket (nucleotide flipping), with Arg-39 donating a hydrogen bond to the orphaned cytosine to stabilize the extrahelical DNA conformation. This structural change in DNA presents the lesion to the nucleotide excision repair (NER) pathway. The affinity for O(6)-alkylguanine adducts increases with the size of the alkyl group. Low affinity small O(6)-alkylguanines are directed to the global genome repair pathway of NER via rhp7-rhp16 and rhp41-rhp23, while strong binding to bulky O(6)-alkylguanines stalls the transcription machinery and diverts the damage to the transcription-coupled repair pathway of NER via rhp26. The protein is Alkyltransferase-like protein 1 of Schizosaccharomyces pombe (strain 972 / ATCC 24843) (Fission yeast).